A 117-amino-acid polypeptide reads, in one-letter code: Large ribosomal subunit protein uL18 (117 aa).

This sequence belongs to the universal ribosomal protein uL18 family. In terms of assembly, part of the 50S ribosomal subunit; part of the 5S rRNA/L5/L18/L25 subcomplex. Contacts the 5S and 23S rRNAs.

This is one of the proteins that bind and probably mediate the attachment of the 5S RNA into the large ribosomal subunit, where it forms part of the central protuberance. In Methylococcus capsulatus (strain ATCC 33009 / NCIMB 11132 / Bath), this protein is Large ribosomal subunit protein uL18.